The following is a 109-amino-acid chain: Movement protein (109 aa).

The interval 1–28 is disordered; it reads MDSFGRAPPLWPQSALPRVPGAAPSSSG. The helical transmembrane segment at 34-54 threads the bilayer; the sequence is VGEIAIFTFVAVLALYLLWSW.

Belongs to the mastrevirus movement protein family. In terms of assembly, interacts with the capsid protein (CP). Part of a MP-CP-viral DNA complex.

It is found in the host membrane. Involved in the viral transport within, and between cells. This is Movement protein from Sugarcane streak virus (isolate South Africa) (SSV).